The primary structure comprises 230 residues: Enolase-phosphatase E1 (230 aa).

The protein belongs to the HAD-like hydrolase superfamily. MasA/MtnC family. Monomer. Mg(2+) serves as cofactor.

The enzyme catalyses 5-methylsulfanyl-2,3-dioxopentyl phosphate + H2O = 1,2-dihydroxy-5-(methylsulfanyl)pent-1-en-3-one + phosphate. It participates in amino-acid biosynthesis; L-methionine biosynthesis via salvage pathway; L-methionine from S-methyl-5-thio-alpha-D-ribose 1-phosphate: step 3/6. The protein operates within amino-acid biosynthesis; L-methionine biosynthesis via salvage pathway; L-methionine from S-methyl-5-thio-alpha-D-ribose 1-phosphate: step 4/6. In terms of biological role, bifunctional enzyme that catalyzes the enolization of 2,3-diketo-5-methylthiopentyl-1-phosphate (DK-MTP-1-P) into the intermediate 2-hydroxy-3-keto-5-methylthiopentenyl-1-phosphate (HK-MTPenyl-1-P), which is then dephosphorylated to form the acireductone 1,2-dihydroxy-3-keto-5-methylthiopentene (DHK-MTPene). This chain is Enolase-phosphatase E1, found in Marinobacter nauticus (strain ATCC 700491 / DSM 11845 / VT8) (Marinobacter aquaeolei).